Reading from the N-terminus, the 1196-residue chain is Major DNA-binding protein (1196 aa).

The segment at 499–512 (CNLCTFDTRHACVH) is a zinc-finger region. 2 short sequence motifs (required for filament formation) span residues 843–844 (FW) and 1142–1144 (FNF). The segment at 1158-1196 (GGPGAPGPAFAGRKRAFHGDDPFGEGPPDKKGDLTLDML) is disordered. Positions 1170–1196 (RKRAFHGDDPFGEGPPDKKGDLTLDML) are required for nuclear localization. Over residues 1174–1196 (FHGDDPFGEGPPDKKGDLTLDML) the composition is skewed to basic and acidic residues.

Belongs to the herpesviridae major DNA-binding protein family. As to quaternary structure, homooligomers. Forms double-helical filaments necessary for the formation of replication compartments within the host nucleus. Interacts with the origin-binding protein. Interacts with the helicase primase complex; this interaction stimulates primer synthesis activity of the helicase-primase complex. Interacts with the DNA polymerase. Interacts with the alkaline exonuclease; this interaction increases its nuclease processivity.

Its subcellular location is the host nucleus. In terms of biological role, plays several crucial roles in viral infection. Participates in the opening of the viral DNA origin to initiate replication by interacting with the origin-binding protein. May disrupt loops, hairpins and other secondary structures present on ssDNA to reduce and eliminate pausing of viral DNA polymerase at specific sites during elongation. Promotes viral DNA recombination by performing strand-transfer, characterized by the ability to transfer a DNA strand from a linear duplex to a complementary single-stranded DNA circle. Can also catalyze the renaturation of complementary single strands. Additionally, reorganizes the host cell nucleus, leading to the formation of prereplicative sites and replication compartments. This process is driven by the protein which can form double-helical filaments in the absence of DNA. The chain is Major DNA-binding protein from Homo sapiens (Human).